The chain runs to 745 residues: MSNLSFFQTLSGLAENAKQIAKSSSLSFEENELSHSDLLRLLNSNSDAGKLEAINFILAQMMHGENMSLYFPDVVKLVASENPEIRRLVHIYLLQYAEFNPDLALLSVNTVQKTLYDKNPLTRSTAIRVMSSIRVPAINGIVLLAIQQCITDTADRVRQSAALAITKCYSLDPSYKSQLEEHIKTLLSDNSPIVVPAALFTFEVVCPEKLEIIHPYYHRICTLFPQMNDWDKVVALKTLVRYARLTLPEPSTPSTHSDLKELLESIKSCFFSLLPSTIIAGARAFYYLAPSNQMHLIVEPLLQLLLEKPIVRTTTLRYISQIVYKTPELFKNHIKSFFLIASDSDDTCLLKINILSRLLDAQNSSQILPELLYYINSHPNPSVASTAVKALGDFASANISMAPSCLNTLLLLLKSHNSLIVTEAASSLRLLIHNDPKEIYLQYLAATYETLEVPRAKSVTLWLISEHILIIPRLVPDVLRIAVKTFADETLEVKYQILELSVRLYVLSHSEEKQNDLESRDDVVSLLFNYVLSLIHFDMSYDLRDRARFYKELASTPSSEFTRRIVLESKGNSQKEIIASRDYCIGTASLCLNEDVMGYEPIPNWADVSDLPPDSVREGIKDVLPINPHTGNIYSNNSPGVKALSSDNFKRDFGDTNAINRPKFVGQQTLEEFYASETSESSEGEYETSTSESEDEETDDTSQEEDNEKNSTPDEDTENNNTSSISTKSIMDRPLTEPEPNYWQS.

Ser638 is subject to Phosphoserine. Residues 674 to 745 (YASETSESSE…TEPEPNYWQS (72 aa)) form a disordered region. Acidic residues predominate over residues 680–718 (ESSEGEYETSTSESEDEETDDTSQEEDNEKNSTPDEDTE).

It belongs to the adaptor complexes large subunit family. As to quaternary structure, adaptor protein complex 3 (AP-3) is a heterotetramer composed of 2 large adaptins (apl5 and apl6), a medium adaptin (apm3) and a small adaptin (aps3).

The protein localises to the golgi apparatus. It is found in the cytoplasmic vesicle. Its subcellular location is the clathrin-coated vesicle membrane. Its function is as follows. Adaptins are components of the adaptor complexes which link clathrin to receptors in coated vesicles. Clathrin-associated protein complexes are believed to interact with the cytoplasmic tails of membrane proteins, leading to their selection and concentration. Beta adaptin is a subunit of the plasma membrane adaptor. This Schizosaccharomyces pombe (strain 972 / ATCC 24843) (Fission yeast) protein is AP-3 complex subunit beta (apl6).